The sequence spans 205 residues: LexA repressor (205 aa).

Residues 28-48 (RAEIATRLGFKSANAAEEHLK) constitute a DNA-binding region (H-T-H motif). Residues S122 and K159 each act as for autocatalytic cleavage activity in the active site.

Belongs to the peptidase S24 family. As to quaternary structure, homodimer.

It catalyses the reaction Hydrolysis of Ala-|-Gly bond in repressor LexA.. Represses a number of genes involved in the response to DNA damage (SOS response), including recA and lexA. In the presence of single-stranded DNA, RecA interacts with LexA causing an autocatalytic cleavage which disrupts the DNA-binding part of LexA, leading to derepression of the SOS regulon and eventually DNA repair. The sequence is that of LexA repressor from Shewanella denitrificans (strain OS217 / ATCC BAA-1090 / DSM 15013).